The following is a 274-amino-acid chain: Shikimate dehydrogenase (NADP(+)) (274 aa).

Shikimate-binding positions include 14–16 (SKS) and T60. Residue K64 is the Proton acceptor of the active site. Position 76 (E76) interacts with NADP(+). Residues N85 and D101 each coordinate shikimate. NADP(+) contacts are provided by residues 126-130 (GAGGA), 150-155 (NRTAEK), and M214. Y216 lines the shikimate pocket. Residue G238 coordinates NADP(+).

It belongs to the shikimate dehydrogenase family. As to quaternary structure, homodimer.

The catalysed reaction is shikimate + NADP(+) = 3-dehydroshikimate + NADPH + H(+). It functions in the pathway metabolic intermediate biosynthesis; chorismate biosynthesis; chorismate from D-erythrose 4-phosphate and phosphoenolpyruvate: step 4/7. Its function is as follows. Involved in the biosynthesis of the chorismate, which leads to the biosynthesis of aromatic amino acids. Catalyzes the reversible NADPH linked reduction of 3-dehydroshikimate (DHSA) to yield shikimate (SA). The sequence is that of Shikimate dehydrogenase (NADP(+)) from Pseudomonas paraeruginosa (strain DSM 24068 / PA7) (Pseudomonas aeruginosa (strain PA7)).